The sequence spans 169 residues: Macro domain-containing protein SCO6450 (169 aa).

The 169-residue stretch at 1-169 (MTGITLVQGD…AYEAFAARLG (169 aa)) folds into the Macro domain.

It belongs to the MacroD-type family.

The protein is Macro domain-containing protein SCO6450 of Streptomyces coelicolor (strain ATCC BAA-471 / A3(2) / M145).